Consider the following 635-residue polypeptide: MAVGDQTEQNYLPKKKKSETEDDKRRKKIVPGSLLKAVVRPGGGDSSPVDGDQVIYHCTVRTLDGVVVESTRSESGGRGVPIRDVLGNSKMILGLLEGIPTMHKGEIAMFKMKPEMHYAEIDCPVSAPENFPKDDELHFEIELLDFSKAKIASDDLGVIKKILNEGEGWESPREPYEVKARISAKSGDGHVIFSHTEEPYFFTFGKSEVPKGLEIGIGTMARKEKAVIYVRKQYLTESPLLHIDQDLEEVHFEVELVHFIQVRDMLGDGRLIKRRIRDGRGEFPMDCPLQDSRLSVHYKGMLLNEEKTVFYDSKIDNNDQPLEFSSGEGLVPEGFEMCTRLMLPGEIALVTCPPDYAYDKFPRPPGVSEGAHVQWEIELLGFETPRDWTGLNFQSIMDEADKIRSTGNRLFKEGKFELAKAKYEKVLREFNHVNPQDEDEGKIFGDTRNMLHLNVAACLLKMGEWRKSIETCNKVLEAKPGHVKGLYRRGMAYIAGGEYDDARNDFNMMIKVDKSSEADATAALLKLKQKEQEAESKARKQFKGLFDKRPGEITEVGSEIREESKTIEEVDETKDNDDDETLEEEGATTVSTERKRKWSEKAWPFLKNVMLQIGIQLGVVLIGILIFQFVSAKFT.

The segment covering 1–10 (MAVGDQTEQN) has biased composition (polar residues). Residues 1–28 (MAVGDQTEQNYLPKKKKSETEDDKRRKK) form a disordered region. 3 consecutive PPIase FKBP-type domains span residues 51–147 (GDQV…LDFS), 175–260 (PYEV…VHFI), and 291–383 (DSRL…LGFE). TPR repeat units follow at residues 400 to 433 (ADKIRSTGNRLFKEGKFELAKAKYEKVLREFNHV), 449 to 482 (NMLHLNVAACLLKMGEWRKSIETCNKVLEAKPGH), and 483 to 516 (VKGLYRRGMAYIAGGEYDDARNDFNMMIKVDKSS). A calmodulin-binding region spans residues 530–546 (KEQEAESKARKQFKGLF). The segment covering 569 to 586 (EVDETKDNDDDETLEEEG) has biased composition (acidic residues). The segment at 569 to 593 (EVDETKDNDDDETLEEEGATTVSTE) is disordered. Residues 609-629 (VMLQIGIQLGVVLIGILIFQF) form a helical; Anchor for type IV membrane protein membrane-spanning segment.

Belongs to the FKBP-type PPIase family. Interacts with calmodulin (CaM). Interacts with RPM1 and NAC089. Interacts with the elongase complex core members KCR1, PAS2 and CER10. Expressed ubiquitously.

The protein resides in the endoplasmic reticulum membrane. It is found in the cytoplasm. It localises to the nucleus. The catalysed reaction is [protein]-peptidylproline (omega=180) = [protein]-peptidylproline (omega=0). Its function is as follows. PPIases accelerate the folding of proteins. It catalyzes the cis-trans isomerization of proline imidic peptide bonds in oligopeptides. Essential protein regulating cell division, adhesion and elongation throughout the plant development and embryogenesis. Required for the spatial organization of apical meristems. Involved in the hormonal control of cell division and differentiation mediated by cytokinins and auxin. Regulates the function of NAC089 transcription factor by controlling its targeting to the nucleus upon plant cell division. Interacts with enzymes of the fatty acid elongase complex and favors the generation of very-long-chain fatty acids (VLCFAs) required for polar auxin transport and tissue patterning during plant development. This is Peptidyl-prolyl cis-trans isomerase PASTICCINO1 (PAS1) from Arabidopsis thaliana (Mouse-ear cress).